We begin with the raw amino-acid sequence, 1405 residues long: ATP-dependent helicase/nuclease subunit A (1405 aa).

Residues Arg7–Arg482 enclose the UvrD-like helicase ATP-binding domain. Ala28–Thr35 serves as a coordination point for ATP. The UvrD-like helicase C-terminal domain maps to Pro551 to Gly914. Disordered stretches follow at residues Gln778 to Pro797 and Ala1132 to Thr1165. Residues Gly787–Val796 are compositionally biased toward low complexity.

The protein belongs to the helicase family. AddA subfamily. Heterodimer of AddA and AddB/RexB. Mg(2+) serves as cofactor.

The catalysed reaction is Couples ATP hydrolysis with the unwinding of duplex DNA by translocating in the 3'-5' direction.. It carries out the reaction ATP + H2O = ADP + phosphate + H(+). Functionally, the heterodimer acts as both an ATP-dependent DNA helicase and an ATP-dependent, dual-direction single-stranded exonuclease. Recognizes the chi site generating a DNA molecule suitable for the initiation of homologous recombination. The AddA nuclease domain is required for chi fragment generation; this subunit has the helicase and 3' -&gt; 5' nuclease activities. The polypeptide is ATP-dependent helicase/nuclease subunit A (Moorella thermoacetica (strain ATCC 39073 / JCM 9320)).